The chain runs to 559 residues: Protochlorophyllide-dependent translocon component 52, chloroplastic (559 aa).

The N-terminal 55 residues, 1–55, are a transit peptide targeting the chloroplast; the sequence is MEAALAACALPSLRILNTKPRFRCSFSNPSLPISPNSLITRKSSRFTTAVSSPPS. The disordered stretch occupies residues 44 to 70; sequence SRFTTAVSSPPSSSAATSTNSPPEPEA. Low complexity predominate over residues 47–64; sequence TTAVSSPPSSSAATSTNS. The Rieske domain occupies 85–195; it reads WYPVMPICDL…STVQHEIIWF (111 aa). Residues cysteine 127, histidine 129, cysteine 147, and histidine 150 each coordinate [2Fe-2S] cluster. Fe cation contacts are provided by histidine 248 and histidine 253. Positions 483–486 match the Redox-active motif motif; the sequence is CSSC. The next 2 membrane-spanning stretches (helical) occupy residues 493-513 and 525-545; these read LNALEVILQIASVAMIGVMAV and IAVLVAAVLSFAASKWLSHFI.

The cofactor is [2Fe-2S] cluster.

It localises to the plastid. Its subcellular location is the chloroplast inner membrane. It carries out the reaction protochlorophyllide a + 4 reduced [2Fe-2S]-[ferredoxin] + 2 O2 + 5 H(+) = protochlorophyllide b + 4 oxidized [2Fe-2S]-[ferredoxin] + 3 H2O. With respect to regulation, down-regulated by light. Part of a translocon most abundantly expressed in etiolated plants and involved in the protochlorophyllide-dependent import of the precursor NADPH:protochlorophyllide oxidoreductase A (pPORA). The protein is Protochlorophyllide-dependent translocon component 52, chloroplastic of Arabidopsis thaliana (Mouse-ear cress).